A 175-amino-acid chain; its full sequence is Gamma-crystallin B (175 aa).

Beta/gamma crystallin 'Greek key' domains lie at 2-40 (GKIT…RVDS) and 41-83 (GCWM…CLIP). The segment at 84-88 (QHSGT) is connecting peptide. Beta/gamma crystallin 'Greek key' domains follow at residues 89–129 (YRMR…NVME) and 130–172 (GCWV…RRVM).

This sequence belongs to the beta/gamma-crystallin family.

Its function is as follows. Crystallins are the dominant structural components of the vertebrate eye lens. The protein is Gamma-crystallin B (Crygb) of Mus musculus (Mouse).